A 181-amino-acid chain; its full sequence is Large ribosomal subunit protein uL5 (181 aa).

This sequence belongs to the universal ribosomal protein uL5 family. In terms of assembly, part of the 50S ribosomal subunit; part of the 5S rRNA/L5/L18/L25 subcomplex. Contacts the 5S rRNA and the P site tRNA. Forms a bridge to the 30S subunit in the 70S ribosome.

In terms of biological role, this is one of the proteins that bind and probably mediate the attachment of the 5S RNA into the large ribosomal subunit, where it forms part of the central protuberance. In the 70S ribosome it contacts protein S13 of the 30S subunit (bridge B1b), connecting the 2 subunits; this bridge is implicated in subunit movement. Contacts the P site tRNA; the 5S rRNA and some of its associated proteins might help stabilize positioning of ribosome-bound tRNAs. This chain is Large ribosomal subunit protein uL5, found in Helicobacter pylori (strain G27).